The primary structure comprises 117 residues: UPF0102 protein Spro_4337 (117 aa).

This sequence belongs to the UPF0102 family.

This Serratia proteamaculans (strain 568) protein is UPF0102 protein Spro_4337.